The chain runs to 64 residues: MPKQKTNRAAAKRFKVTAKGKIKSANAFTSHRFHGKTKKQRRQLRGTAIIEKPMVKTYHKLLQK.

This sequence belongs to the bacterial ribosomal protein bL35 family.

This Lactiplantibacillus plantarum (strain ATCC BAA-793 / NCIMB 8826 / WCFS1) (Lactobacillus plantarum) protein is Large ribosomal subunit protein bL35.